Reading from the N-terminus, the 312-residue chain is MLKRDCSSVVGSERERDGSSLALKRHCSSVVKLLLPHDVVGLILERLPVESLLRFKCVSNQWKSTIESQCFQERQLIRRMESRGPDVLVVSFADDEDKYGRKAVFGSSIVSTFRFPTLHTLICYGSCEGLICIYCVYSPNIVVNPATKWHRSCPLSNLQQFLDDKFEKKEYDFPTPKLAFGKDKLNGTYKQVWLYNSSEFRLDDVTTCEVFDFSNNAWRYVHPASPYRINDYQDPVYSDGSVHWLTEGKESKILSFHLHTETFQVLCEAPFLRERDPVGDSMCILDNRLCVSEINGPAQLIWSLDSSGGNKC.

The region spanning 29-80 is the F-box domain; that stretch reads SVVKLLLPHDVVGLILERLPVESLLRFKCVSNQWKSTIESQCFQERQLIRRM.

The polypeptide is F-box protein At1g11270 (Arabidopsis thaliana (Mouse-ear cress)).